Here is a 310-residue protein sequence, read N- to C-terminus: Probable deoxyhypusine synthase (310 aa).

The active-site Nucleophile is the K284.

The protein belongs to the deoxyhypusine synthase family. NAD(+) is required as a cofactor.

It carries out the reaction [eIF5A protein]-L-lysine + spermidine = [eIF5A protein]-deoxyhypusine + propane-1,3-diamine. It functions in the pathway protein modification; eIF5A hypusination. Catalyzes the NAD-dependent oxidative cleavage of spermidine and the subsequent transfer of the butylamine moiety of spermidine to the epsilon-amino group of a specific lysine residue of the eIF-5A precursor protein to form the intermediate deoxyhypusine residue. The chain is Probable deoxyhypusine synthase (dys) from Thermoplasma acidophilum (strain ATCC 25905 / DSM 1728 / JCM 9062 / NBRC 15155 / AMRC-C165).